The following is an 866-amino-acid chain: E3 ubiquitin-protein ligase RNF216 (866 aa).

Disordered regions lie at residues 46-117 (LVTP…NPRS), 131-161 (YTES…SAAL), and 211-240 (EFPG…HPLG). Positions 55–76 (EEEDLDDDVILTEDDSEDDYGE) are enriched in acidic residues. Glycyl lysine isopeptide (Lys-Gly) (interchain with G-Cter in SUMO2) cross-links involve residues leucine 80, threonine 89, and lysine 100. A compositionally biased stretch (polar residues) spans 137-156 (LETQNQSSEDSETELLSNLG). Glycyl lysine isopeptide (Lys-Gly) (interchain with G-Cter in SUMO2) cross-links involve residues lysine 351 and lysine 354. Residue serine 419 is modified to Phosphoserine. Residues lysine 425, lysine 430, lysine 448, lysine 459, and lysine 485 each participate in a glycyl lysine isopeptide (Lys-Gly) (interchain with G-Cter in SUMO2) cross-link. The stretch at 475-491 (VQQEQEFYEQKIKEMAE) forms a coiled coil. Residues 511 to 728 (QLIECRCCYG…SPGAPCQECS (218 aa)) form a TRIAD supradomain region. Zn(2+)-binding residues include cysteine 515, cysteine 518, cysteine 537, cysteine 540, cysteine 605, and cysteine 608. An RING-type 1 zinc finger spans residues 515–564 (CRCCYGEFPFEELTQCADAHLFCKECLIRYAQEAVFGSGKLELSCMEGSC). Residues 583 to 648 (YKYYERKAEE…LWKEHNGLTC (66 aa)) form an IBR-type zinc finger. A Glycyl lysine isopeptide (Lys-Gly) (interchain with G-Cter in SUMO2) cross-link involves residue lysine 619. Residues cysteine 623, cysteine 628, cysteine 633, cysteine 636, histidine 643, and cysteine 648 each contribute to the Zn(2+) site. Glycyl lysine isopeptide (Lys-Gly) (interchain with G-Cter in SUMO2) cross-links involve residues lysine 658 and lysine 666. Zn(2+) is bound by residues cysteine 675 and cysteine 678. The segment at 675–703 (CHKCGTGLIKSEGCNRMSCRCGAQMCYLC) adopts an RING-type 2; atypical zinc-finger fold. Cysteine 688 is a catalytic residue. Cysteine 693, cysteine 695, cysteine 700, cysteine 703, and histidine 716 together coordinate Zn(2+). Serine 719 is modified (phosphoserine; by MAPK1). Cysteine 724 provides a ligand contact to Zn(2+). Positions 737-763 (TEDDEKLIEEIQKEAEEEQKRKNGENT) form a coiled coil. Glycyl lysine isopeptide (Lys-Gly) (interchain with G-Cter in SUMO2) cross-links involve residues lysine 765 and lysine 773.

As to quaternary structure, interacts with UBE2L3 and to some extent with UBE2L6. Interacts with TRAF3, TLR3, TLR4, TLR5 and TLR9. Isoform 3/ZIN binds RIPK1. (Microbial infection) Isoform 3/ZIN binds RIPK1 and HIV Vif. In terms of processing, auto-ubiquitinated. Post-translationally, phosphorylation at Ser-719 enhances acceptor ubiquitin binding and chain-type specificity towards 'Lys-63' di-ubiquitin but not di-ubiquitin with other linkage types. As to expression, ubiquitous, with the highest levels of expression in testis and peripheral blood leukocytes.

The protein localises to the cytoplasm. It localises to the cytoplasmic vesicle. The protein resides in the clathrin-coated vesicle. It catalyses the reaction S-ubiquitinyl-[E2 ubiquitin-conjugating enzyme]-L-cysteine + [acceptor protein]-L-lysine = [E2 ubiquitin-conjugating enzyme]-L-cysteine + N(6)-ubiquitinyl-[acceptor protein]-L-lysine.. Its pathway is protein modification; protein ubiquitination. With respect to regulation, allosterically activated by 'Lys-63'-linked di-ubiquitin. In terms of biological role, E3 ubiquitin ligase which accepts ubiquitin from specific E2 ubiquitin-conjugating enzymes, and then transfers it to substrates promoting their ubiquitination. Plays a role in the regulation of antiviral responses by promoting the degradation of TRAF3, TLR4 and TLR9. In turn, down-regulates NF-kappa-B and IRF3 activation as well as beta interferon production. Also participates in the regulation of autophagy by ubiquitinating BECN1 leading to its degradation and autophagy inhibition. Plays a role in ARC-dependent synaptic plasticity by mediating ARC ubiquitination resulting in its rapid proteasomal degradation. Plays aso an essential role in spermatogenesis and male fertility. Mechanistically, regulates meiosis by promoting the degradation of PRKACB through the ubiquitin-mediated lysosome pathway. Modulates the gonadotropin-releasing hormone signal pathway by affecting the stability of STAU2 that is required for the microtubule-dependent transport of neuronal RNA from the cell body to the dendrite. Its function is as follows. Inhibits TNF and IL-1 mediated activation of NF-kappa-B. Promotes TNF and RIP mediated apoptosis. The chain is E3 ubiquitin-protein ligase RNF216 (RNF216) from Homo sapiens (Human).